The following is a 65-amino-acid chain: Sarcoplasmic/endoplasmic reticulum calcium ATPase regulator ARLN (65 aa).

Met-1 carries the post-translational modification N-acetylmethionine. The tract at residues Met-1–Asn-36 is disordered. Basic and acidic residues predominate over residues Gly-12–Asp-28. Ser-19 is modified (phosphoserine). A helical transmembrane segment spans residues Trp-44–Leu-64.

In terms of assembly, homooligomer. Can also form heterooligomers with other sarcoplasmic/endoplasmic reticulum calcium ATPase (SERCA) regulators ERLN, PLN, SLN and STRIT1/DWORF. Monomer. Interacts as a monomer with ATP2A2/SERCA2; the interaction results in inhibition of ATP2A2 Ca(2+) affinity. In the embryo, expressed in heart, epidermal epithelium, salivary gland, brown fat, intestinal epithelium and bladder urothelium.

The protein localises to the endoplasmic reticulum membrane. Its function is as follows. Inhibits the activity of the calcium ATPases ATP2A2/SERCA2 and ATP2A3/SERCA3 by decreasing their apparent affinity for Ca(2+). The chain is Sarcoplasmic/endoplasmic reticulum calcium ATPase regulator ARLN (Arln) from Mus musculus (Mouse).